Consider the following 141-residue polypeptide: Large ribosomal subunit protein bL17 (141 aa).

It belongs to the bacterial ribosomal protein bL17 family. As to quaternary structure, part of the 50S ribosomal subunit. Contacts protein L32.

The sequence is that of Large ribosomal subunit protein bL17 from Chlamydia trachomatis serovar D (strain ATCC VR-885 / DSM 19411 / UW-3/Cx).